The following is a 357-amino-acid chain: Phosphoserine aminotransferase (357 aa).

Position 41 (Arg41) interacts with L-glutamate. Pyridoxal 5'-phosphate-binding positions include 76-77, Trp102, Thr152, Asp171, and Gln194; that span reads GT. Lys195 is subject to N6-(pyridoxal phosphate)lysine. 235-236 contacts pyridoxal 5'-phosphate; it reads NT.

This sequence belongs to the class-V pyridoxal-phosphate-dependent aminotransferase family. SerC subfamily. In terms of assembly, homodimer. It depends on pyridoxal 5'-phosphate as a cofactor.

The protein localises to the cytoplasm. It carries out the reaction O-phospho-L-serine + 2-oxoglutarate = 3-phosphooxypyruvate + L-glutamate. It catalyses the reaction 4-(phosphooxy)-L-threonine + 2-oxoglutarate = (R)-3-hydroxy-2-oxo-4-phosphooxybutanoate + L-glutamate. It participates in amino-acid biosynthesis; L-serine biosynthesis; L-serine from 3-phospho-D-glycerate: step 2/3. Catalyzes the reversible conversion of 3-phosphohydroxypyruvate to phosphoserine and of 3-hydroxy-2-oxo-4-phosphonooxybutanoate to phosphohydroxythreonine. The protein is Phosphoserine aminotransferase of Limosilactobacillus fermentum (strain NBRC 3956 / LMG 18251) (Lactobacillus fermentum).